Reading from the N-terminus, the 229-residue chain is Small ribosomal subunit protein uS3 (229 aa).

One can recognise a KH type-2 domain in the interval 39–107 (VRQYLTEKLK…TAQINIAEIR (69 aa)).

The protein belongs to the universal ribosomal protein uS3 family. In terms of assembly, part of the 30S ribosomal subunit. Forms a tight complex with proteins S10 and S14.

Functionally, binds the lower part of the 30S subunit head. Binds mRNA in the 70S ribosome, positioning it for translation. This is Small ribosomal subunit protein uS3 from Shewanella denitrificans (strain OS217 / ATCC BAA-1090 / DSM 15013).